A 323-amino-acid chain; its full sequence is Acetyl esterase (323 aa).

The Involved in the stabilization of the negatively charged intermediate by the formation of the oxyanion hole signature appears at 91–93 (HGG). Catalysis depends on residues S165, D262, and H292.

This sequence belongs to the 'GDXG' lipolytic enzyme family. In terms of assembly, homodimer. Interacts with MalT and MelA.

Its subcellular location is the cytoplasm. Displays esterase activity towards short chain fatty esters (acyl chain length of up to 8 carbons). Able to hydrolyze triacetylglycerol (triacetin) and tributyrylglycerol (tributyrin), but not trioleylglycerol (triolein) or cholesterol oleate. Negatively regulates MalT activity by antagonizing maltotriose binding. Inhibits MelA galactosidase activity. The chain is Acetyl esterase from Salmonella paratyphi A (strain AKU_12601).